The chain runs to 447 residues: C4-dicarboxylate transport protein (447 aa).

The next 9 helical transmembrane spans lie at 13–33 (SLYFQVITAIVIGVLLGHYWP), 49–69 (LIKMIIAPIIFCTVVVGIAGM), 81–101 (LALLYFEVVSTLALLLGLLIV), 149–169 (AFAKGEMLQVLLFSVMFGFAL), 189–209 (VLFAIVGFIMKVAPIGAFGAM), 227–247 (LMGTFYATCLVFIFGVLGLIA), 302–322 (GYSFNLDGTSIYLTMAAVFIA), 336–356 (TLLAVLLLTSKGAAGVTGSGF), and 357–377 (IVLAATLSAVGGVPVAGLALI). The tract at residues 422-447 (ETEAEANEPEAVLDEIDQHMPVPAAR) is disordered. The segment covering 425 to 436 (AEANEPEAVLDE) has biased composition (acidic residues).

It belongs to the dicarboxylate/amino acid:cation symporter (DAACS) (TC 2.A.23) family.

It is found in the cell inner membrane. In terms of biological role, responsible for the transport of dicarboxylates such as succinate, fumarate, and malate from the periplasm across the membrane. This is C4-dicarboxylate transport protein from Leptothrix cholodnii (strain ATCC 51168 / LMG 8142 / SP-6) (Leptothrix discophora (strain SP-6)).